Here is an 88-residue protein sequence, read N- to C-terminus: CRISPR-associated endoribonuclease Cas2 3 (88 aa).

Residue Asp9 participates in Mg(2+) binding.

This sequence belongs to the CRISPR-associated endoribonuclease Cas2 protein family. In terms of assembly, homodimer, forms a heterotetramer with a Cas1 homodimer. Mg(2+) is required as a cofactor.

Functionally, CRISPR (clustered regularly interspaced short palindromic repeat), is an adaptive immune system that provides protection against mobile genetic elements (viruses, transposable elements and conjugative plasmids). CRISPR clusters contain sequences complementary to antecedent mobile elements and target invading nucleic acids. CRISPR clusters are transcribed and processed into CRISPR RNA (crRNA). Functions as a ssRNA-specific endoribonuclease. Involved in the integration of spacer DNA into the CRISPR cassette. The polypeptide is CRISPR-associated endoribonuclease Cas2 3 (Thermodesulfovibrio yellowstonii (strain ATCC 51303 / DSM 11347 / YP87)).